A 216-amino-acid chain; its full sequence is Peroxiredoxin (216 aa).

Residues 2–158 (VVIGEKFPEV…ILRLVKALKV (157 aa)) form the Thioredoxin domain. Catalysis depends on Cys46, which acts as the Cysteine sulfenic acid (-SOH) intermediate. A substrate-binding site is contributed by Arg121. Cys205 and Cys211 are oxidised to a cystine.

This sequence belongs to the peroxiredoxin family. Prx6 subfamily. In terms of assembly, homodecamer. Pentamer of dimers that assemble into a ring structure.

The protein localises to the cytoplasm. It catalyses the reaction a hydroperoxide + [thioredoxin]-dithiol = an alcohol + [thioredoxin]-disulfide + H2O. Its function is as follows. Thiol-specific peroxidase that catalyzes the reduction of hydrogen peroxide and organic hydroperoxides to water and alcohols, respectively. Plays a role in cell protection against oxidative stress by detoxifying peroxides. The chain is Peroxiredoxin from Thermococcus kodakarensis (strain ATCC BAA-918 / JCM 12380 / KOD1) (Pyrococcus kodakaraensis (strain KOD1)).